The primary structure comprises 205 residues: Probable GTP-binding protein EngB (205 aa).

In terms of domain architecture, EngB-type G spans 22-195; it reads NLPEVALVGR…LDLLDYFWNG (174 aa). GTP-binding positions include 30–37, 57–61, 75–78, 142–145, and 174–176; these read GRSNVGKS, GKTQT, DLPG, TKAD, and FSA. Residues S37 and T59 each coordinate Mg(2+).

This sequence belongs to the TRAFAC class TrmE-Era-EngA-EngB-Septin-like GTPase superfamily. EngB GTPase family. Requires Mg(2+) as cofactor.

Its function is as follows. Necessary for normal cell division and for the maintenance of normal septation. The protein is Probable GTP-binding protein EngB of Heliobacterium modesticaldum (strain ATCC 51547 / Ice1).